The sequence spans 96 residues: (4S)-4-hydroxy-5-phosphonooxypentane-2,3-dione isomerase (96 aa).

The region spanning histidine 2–phenylalanine 91 is the ABM domain.

It belongs to the LsrG family. In terms of assembly, homodimer.

Its subcellular location is the cytoplasm. The catalysed reaction is (2S)-2-hydroxy-3,4-dioxopentyl phosphate = 3-hydroxy-2,4-dioxopentyl phosphate. In terms of biological role, involved in the degradation of phospho-AI-2, thereby terminating induction of the lsr operon and closing the AI-2 signaling cycle. Catalyzes the conversion of (4S)-4-hydroxy-5-phosphonooxypentane-2,3-dione (P-DPD) to 3-hydroxy-5-phosphonooxypentane-2,4-dione (P-HPD). In Salmonella choleraesuis (strain SC-B67), this protein is (4S)-4-hydroxy-5-phosphonooxypentane-2,3-dione isomerase.